The sequence spans 148 residues: MASLLSPSMPVLAAVALTLTLAVIPEASTNAEAKQVVLGGVEPADPKDKEVQKVVKFAVRTYNDMDNDLYLSKPIRLMSASQQVVAGKNYYLKIELGRTTCTKTESNLVDCPFNEQPDQQKRVICNFQINVAPWLNKMSMTNFNCYNF.

Residues 1–33 form the signal peptide; the sequence is MASLLSPSMPVLAAVALTLTLAVIPEASTNAEA. The Cystatin kininogen-type domain occupies 36 to 148; the sequence is VVLGGVEPAD…SMTNFNCYNF (113 aa). Intrachain disulfides connect cysteine 101/cysteine 111 and cysteine 125/cysteine 145.

Belongs to the cystatin family. As to expression, in cartilage, expressed mainly in mature chondrocytes including prehypertrophic and hypertrophic cells (at protein level). Expressed exclusively in cartilage.

It is found in the cytoplasm. Its subcellular location is the cytosol. Functionally, may play a role in the last steps of the chondrocyte differentiation pathway as an inducer of maturation. Induces chondrocyte calcification during endochondral ossification by playing a role in the transcriptional inhibition of ENPP1, a generator of pyrophosphate which inhibits calcification. Possibly impairs the binding of a transcription factor to the ENPP1 promoter. Unlike other cystatins, does not have thiol protease inhibitor activity. This is Cystatin-D from Mus musculus (Mouse).